Reading from the N-terminus, the 152-residue chain is Nucleoside diphosphate kinase A (152 aa).

4 residues coordinate ATP: Lys12, Phe60, Arg88, and Thr94. Lys100 is covalently cross-linked (Glycyl lysine isopeptide (Lys-Gly) (interchain with G-Cter in ubiquitin)). ATP is bound by residues Arg105 and Asn115. His118 serves as the catalytic Pros-phosphohistidine intermediate. Phosphoserine is present on residues Ser120 and Ser122. Lys124 is modified (N6-acetyllysine). The residue at position 125 (Ser125) is a Phosphoserine.

The protein belongs to the NDK family. As to quaternary structure, hexamer of two different chains: An and B (A6, A5B, A4B2, A3B3, A2B4, AB5, B6). Interacts with PRUNE1. Component of the SET complex, composed of at least ANP32A, APEX1, HMGB2, NME1, SET and TREX1. Within this complex, interacts directly with SET. Also interacts with TREX1, but only following translocation to the nucleus. The cofactor is Mg(2+).

It localises to the cytoplasm. It is found in the nucleus. It catalyses the reaction a 2'-deoxyribonucleoside 5'-diphosphate + ATP = a 2'-deoxyribonucleoside 5'-triphosphate + ADP. The enzyme catalyses a ribonucleoside 5'-diphosphate + ATP = a ribonucleoside 5'-triphosphate + ADP. With respect to regulation, autophosphorylation at His-118 increases serine/threonine protein kinase activity of the enzyme. Interaction with the SET complex inhibits exonuclease activity. Major role in the synthesis of nucleoside triphosphates other than ATP. The ATP gamma phosphate is transferred to the NDP beta phosphate via a ping-pong mechanism, using a phosphorylated active-site intermediate. Possesses nucleoside-diphosphate kinase, serine/threonine-specific protein kinase, geranyl and farnesyl pyrophosphate kinase, histidine protein kinase and 3'-5' exonuclease activities. Involved in cell proliferation, differentiation and development, signal transduction, G protein-coupled receptor endocytosis, and gene expression. Required for neural development including neural patterning and cell fate determination. During GZMA-mediated cell death, works in concert with TREX1. NME1 nicks one strand of DNA and TREX1 removes bases from the free 3' end to enhance DNA damage and prevent DNA end reannealing and rapid repair. The chain is Nucleoside diphosphate kinase A (Nme1) from Mus musculus (Mouse).